We begin with the raw amino-acid sequence, 319 residues long: MEPILAKNPNRFVIFPIQYHDIWNMYKKAEASFWTVEEVDISKDINDWNKLTPDEKYFIKHVLAFFAASDGIVNENLAERFCIEVQITEARCFYGFQMAIENIHSEMYSLLIDTYVKDSNEKNYLFNAIETMPCVKKKADWAQKWIHDSAGYGERLIAFAAVEGIFFSGSFASIFWLKKRGLMPGLTFSNELISRDEGLHCDFACLMFKHLLYPPSEETVRSIITDAVSIEQEFLTVALPVKLIGMNCEMMKTYMEFVADRLISELGFKRIYNVTNPSDFMENISLEGKTNFFEKRVGEYQKMGVMSQEDNHFSLDVDF.

Residues Asp-70, Glu-101, and His-104 each contribute to the Fe cation site. The active site involves Tyr-108. 3 residues coordinate Fe cation: Glu-163, Glu-197, and His-200. Residues 313–319 (FSLDVDF) are interaction with R1.

It belongs to the ribonucleoside diphosphate reductase small chain family. In terms of assembly, interacts with RNR1/OPG080 subunit. Can interact with host RNR1 supunit. It depends on Fe cation as a cofactor.

It carries out the reaction a 2'-deoxyribonucleoside 5'-diphosphate + [thioredoxin]-disulfide + H2O = a ribonucleoside 5'-diphosphate + [thioredoxin]-dithiol. In terms of biological role, ribonucleoside-diphosphate reductase holoenzyme provides the precursors necessary for viral DNA synthesis. Allows virus growth in non-dividing cells. Catalyzes the biosynthesis of deoxyribonucleotides from the corresponding ribonucleotides. This chain is Ribonucleoside-diphosphate reductase small chain (OPG048), found in Homo sapiens (Human).